The sequence spans 288 residues: MIMAALPFKLFASIQYLLPQHGLSRFVHWAVRIRQPWFKNALIRAFCRFYRVDLAESVCSSPESFECFNAFFTRALKPGVRSVCSEPDAIACPADGMISQLGAIKGTRLFQAKGRCFELAELLGGDRSRTEAFENGSFVTVYLSPRDYHRVHMPVAGTLAAMTHVPGALFSVNVATTENVPNLFARNERLICYFDTAGGPMAVILVGAIFVSSIETVWHGEVTPPRSKTIRRWDYSGQGLRFERGAEIGRFNMGSTVIVLFGPGHARWRAGIGAGMSVKMGLSLGSCR.

Catalysis depends on charge relay system; for autoendoproteolytic cleavage activity residues Asp-95, His-152, and Ser-255. Ser-255 (schiff-base intermediate with substrate; via pyruvic acid; for decarboxylase activity) is an active-site residue. Residue Ser-255 is modified to Pyruvic acid (Ser); by autocatalysis.

It belongs to the phosphatidylserine decarboxylase family. PSD-B subfamily. Prokaryotic type I sub-subfamily. Heterodimer of a large membrane-associated beta subunit and a small pyruvoyl-containing alpha subunit. It depends on pyruvate as a cofactor. Is synthesized initially as an inactive proenzyme. Formation of the active enzyme involves a self-maturation process in which the active site pyruvoyl group is generated from an internal serine residue via an autocatalytic post-translational modification. Two non-identical subunits are generated from the proenzyme in this reaction, and the pyruvate is formed at the N-terminus of the alpha chain, which is derived from the carboxyl end of the proenzyme. The autoendoproteolytic cleavage occurs by a canonical serine protease mechanism, in which the side chain hydroxyl group of the serine supplies its oxygen atom to form the C-terminus of the beta chain, while the remainder of the serine residue undergoes an oxidative deamination to produce ammonia and the pyruvoyl prosthetic group on the alpha chain. During this reaction, the Ser that is part of the protease active site of the proenzyme becomes the pyruvoyl prosthetic group, which constitutes an essential element of the active site of the mature decarboxylase.

Its subcellular location is the cell membrane. It carries out the reaction a 1,2-diacyl-sn-glycero-3-phospho-L-serine + H(+) = a 1,2-diacyl-sn-glycero-3-phosphoethanolamine + CO2. The protein operates within phospholipid metabolism; phosphatidylethanolamine biosynthesis; phosphatidylethanolamine from CDP-diacylglycerol: step 2/2. Functionally, catalyzes the formation of phosphatidylethanolamine (PtdEtn) from phosphatidylserine (PtdSer). In Methylococcus capsulatus (strain ATCC 33009 / NCIMB 11132 / Bath), this protein is Phosphatidylserine decarboxylase proenzyme.